The following is a 945-amino-acid chain: Xylanolytic transcriptional activator xlnR (945 aa).

Disordered stretches follow at residues 1 to 33 (MSTP…TVGL) and 53 to 74 (AAGT…MSHA). Low complexity predominate over residues 14–24 (SPFSSGSQSTG). A DNA-binding region (zn(2)-C6 fungal-type) is located at residues 125 to 151 (CDQCNQLRTKCDGQHPCAHCIEFGLTC). 2 disordered regions span residues 172–251 (AAAA…PSLG) and 559–601 (PPNV…INVT). Composition is skewed to polar residues over residues 177–188 (HGSNGHSGQANA) and 218–251 (ISSQ…PSLG). The segment covering 565 to 581 (ARQDGERDGDGEADRRH) has biased composition (basic and acidic residues).

Belongs to the xlnR/xlr1 family.

The protein localises to the nucleus. Its function is as follows. Transcriptional activator of the xylanolytic system. Involved in the regulation of extracellular cellulolytic and xylanolytic genes and in the regulation of the intracellular activities of D-xylose catabolic genes in the pentose catabolic pathway (PCP) in response to the presence of D-xylose. This chain is Xylanolytic transcriptional activator xlnR (xlnR), found in Aspergillus kawachii (White koji mold).